The following is a 102-amino-acid chain: Small ribosomal subunit protein uS10 (102 aa).

It belongs to the universal ribosomal protein uS10 family. In terms of assembly, part of the 30S ribosomal subunit.

Involved in the binding of tRNA to the ribosomes. The sequence is that of Small ribosomal subunit protein uS10 from Methanospirillum hungatei JF-1 (strain ATCC 27890 / DSM 864 / NBRC 100397 / JF-1).